Reading from the N-terminus, the 158-residue chain is Snaclec agglucetin subunit alpha-2 (158 aa).

The signal sequence occupies residues 1 to 23 (MGRFIFVSFGLLVVFLSLSGTGA). 3 disulfide bridges follow: Cys-27–Cys-38, Cys-55–Cys-152, and Cys-127–Cys-144. The region spanning 34 to 153 (YDQYCYQVIK…CIQLNPFVCK (120 aa)) is the C-type lectin domain.

Belongs to the snaclec family. In terms of assembly, heterotetramer of the subunits alpha-1, alpha-2, beta-1 and beta-2; disulfide-linked. Expressed by the venom gland.

It is found in the secreted. Its function is as follows. Agglucetin specifically causes platelet aggregation and surface exposure of integrin alpha-IIb/beta-3 with a GPIb-(GP1BA-) dependent manner in washed platelets. It binds to human platelets in a saturable manner, and its binding is specifically blocked by anti-GP Ib mAb. It regulates endothelial cell survival and promotes angiogenesis by activating integrin alpha-v/beta-3 signaling through FAK/phosphatidylinositol 3-kinase (PI3K)/Akt pathway. This Deinagkistrodon acutus (Hundred-pace snake) protein is Snaclec agglucetin subunit alpha-2.